The following is a 728-amino-acid chain: Catalase-peroxidase 1 (728 aa).

A signal peptide spans 1 to 22 (MDKTQSSQGKCPVMHGANSAVA). The segment at residues 97 to 225 (WHSAGTYRVA…LAAVMMGLIY (129 aa)) is a cross-link (tryptophyl-tyrosyl-methioninium (Trp-Tyr) (with M-251)). Residue histidine 98 is the Proton acceptor of the active site. A cross-link (tryptophyl-tyrosyl-methioninium (Tyr-Met) (with W-97)) is located at residues 225–251 (YVNPEGVDGKPDPLRTAQDVRVTFARM). Histidine 266 provides a ligand contact to heme b.

Belongs to the peroxidase family. Peroxidase/catalase subfamily. In terms of assembly, homodimer or homotetramer. It depends on heme b as a cofactor. Formation of the three residue Trp-Tyr-Met cross-link is important for the catalase, but not the peroxidase activity of the enzyme.

The enzyme catalyses H2O2 + AH2 = A + 2 H2O. It catalyses the reaction 2 H2O2 = O2 + 2 H2O. Its function is as follows. Bifunctional enzyme with both catalase and broad-spectrum peroxidase activity. The chain is Catalase-peroxidase 1 from Shewanella sp. (strain MR-4).